We begin with the raw amino-acid sequence, 1390 residues long: ATPase family AAA domain-containing protein 2 (1390 aa).

Residues 40-63 (RSAGAAQKKPAATTAKAGDGSSVK) form a disordered region. The segment covering 42-57 (AGAAQKKPAATTAKAG) has biased composition (low complexity). Residues S60 and S61 each carry the phosphoserine modification. Residue K125 forms a Glycyl lysine isopeptide (Lys-Gly) (interchain with G-Cter in SUMO2) linkage. A phosphoserine mark is found at S165 and S170. A disordered region spans residues 216–380 (LNMYTRGKQK…HFERRRKRSR (165 aa)). The segment covering 223–232 (KQKDIQRTDE) has biased composition (basic and acidic residues). The span at 244–288 (SSEEGEDQEHEDDGEDEDDEDDDDDDDDDDDDDDEDDEDEEDGEE) shows a compositional bias: acidic residues. K317 participates in a covalent cross-link: Glycyl lysine isopeptide (Lys-Gly) (interchain with G-Cter in SUMO2). A phosphoserine mark is found at S327, S337, S342, and S410. Position 467–474 (467–474 (GPPGTGKT)) interacts with ATP. Residues S746 and S751 each carry the phosphoserine modification. Coiled coils occupy residues 970-994 (LTAE…IFLR) and 1086-1112 (YAII…KKRG). The region spanning 980–1092 (EQEEDTFREL…DTAYAIIKEE (113 aa)) is the Bromo domain. The disordered stretch occupies residues 1124-1163 (HVMPKQNSTLVGDKRSDPEQNEKLKTPSTPVACSTPAQLK). K1128 participates in a covalent cross-link: Glycyl lysine isopeptide (Lys-Gly) (interchain with G-Cter in SUMO2). Over residues 1135-1148 (GDKRSDPEQNEKLK) the composition is skewed to basic and acidic residues. A Phosphoserine modification is found at S1139. A Glycyl lysine isopeptide (Lys-Gly) (interchain with G-Cter in SUMO2) cross-link involves residue K1148. 3 positions are modified to phosphothreonine: T1149, T1152, and T1176. Positions 1149 to 1160 (TPSTPVACSTPA) are enriched in polar residues. The interval 1181–1242 (RKISQAKDDS…SESKLELRNN (62 aa)) is disordered. Positions 1185-1200 (QAKDDSQNAIDHKIES) are enriched in basic and acidic residues. Residues S1200, S1233, and S1235 each carry the phosphoserine modification. Residues 1229-1242 (QQNASESKLELRNN) are compositionally biased toward polar residues. K1236 is covalently cross-linked (Glycyl lysine isopeptide (Lys-Gly) (interchain with G-Cter in SUMO2)). S1243 and S1302 each carry phosphoserine. T1323 carries the phosphothreonine modification.

The protein belongs to the AAA ATPase family. Interacts with ESR1 and NCOA3 and these interactions are enhanced by estradiol. Interacts with acetylated lysine residues on histone H1.4, H2A, H2B and H3 (in vitro). In terms of tissue distribution, highly expressed in estrogen receptor positive breast tumors and in osteosarcoma tumors.

It is found in the nucleus. It carries out the reaction ATP + H2O = ADP + phosphate + H(+). Its function is as follows. May be a transcriptional coactivator of the nuclear receptor ESR1 required to induce the expression of a subset of estradiol target genes, such as CCND1, MYC and E2F1. May play a role in the recruitment or occupancy of CREBBP at some ESR1 target gene promoters. May be required for histone hyperacetylation. Involved in the estrogen-induced cell proliferation and cell cycle progression of breast cancer cells. This is ATPase family AAA domain-containing protein 2 (ATAD2) from Homo sapiens (Human).